Here is a 460-residue protein sequence, read N- to C-terminus: Cation efflux system protein CusC (460 aa).

The signal sequence occupies residues 1-17 (MSPCKLLPFCVALALTG). The N-palmitoyl cysteine moiety is linked to residue Cys18. Cys18 carries the S-diacylglycerol cysteine lipid modification.

This sequence belongs to the outer membrane factor (OMF) (TC 1.B.17) family. Homotrimer. Component of the cus efflux system composed of CusA, CusB, CusC and CusF.

The protein localises to the cell outer membrane. Its function is as follows. Forms pores that allow passive diffusion of cations across the outer membrane. Part of a cation efflux system that mediates resistance to copper and silver. This is Cation efflux system protein CusC (cusC) from Escherichia coli O6:H1 (strain CFT073 / ATCC 700928 / UPEC).